Reading from the N-terminus, the 408-residue chain is Probable fructose-2,6-bisphosphatase C732.02c (408 aa).

16-24 (GLPASGKTS) is a binding site for ATP. The active site involves Asp-88. Residue 127–132 (NITDMC) coordinates ATP. A beta-D-fructose 6-phosphate-binding site is contributed by Tyr-157. Residue Arg-213 coordinates beta-D-fructose 2,6-bisphosphate. His-214 functions as the Tele-phosphohistidine intermediate in the catalytic mechanism. Beta-D-fructose 2,6-bisphosphate contacts are provided by Asn-220 and Gly-226. Glu-285 functions as the Proton donor/acceptor in the catalytic mechanism. Beta-D-fructose 2,6-bisphosphate contacts are provided by Tyr-296, Arg-310, Lys-314, Tyr-325, Gln-351, and Arg-355. 307–310 (AELR) is a binding site for ATP. ATP is bound by residues 351 to 355 (QAILR) and Tyr-387.

The protein in the C-terminal section; belongs to the phosphoglycerate mutase family.

The catalysed reaction is beta-D-fructose 2,6-bisphosphate + H2O = beta-D-fructose 6-phosphate + phosphate. This is predominantly if not solely a fructose-2,6-bisphosphatase. The protein is Probable fructose-2,6-bisphosphatase C732.02c of Schizosaccharomyces pombe (strain 972 / ATCC 24843) (Fission yeast).